We begin with the raw amino-acid sequence, 203 residues long: uncharacterized protein (203 aa).

This is an uncharacterized protein from Magallana gigas (Pacific oyster).